Consider the following 190-residue polypeptide: Protein GrpE (190 aa).

The disordered stretch occupies residues 21–49 (DDLQEEVEATETEETVEEVIEETPEKSEL). Residues 23–42 (LQEEVEATETEETVEEVIEE) are compositionally biased toward acidic residues.

The protein belongs to the GrpE family. In terms of assembly, homodimer.

The protein localises to the cytoplasm. Its function is as follows. Participates actively in the response to hyperosmotic and heat shock by preventing the aggregation of stress-denatured proteins, in association with DnaK and GrpE. It is the nucleotide exchange factor for DnaK and may function as a thermosensor. Unfolded proteins bind initially to DnaJ; upon interaction with the DnaJ-bound protein, DnaK hydrolyzes its bound ATP, resulting in the formation of a stable complex. GrpE releases ADP from DnaK; ATP binding to DnaK triggers the release of the substrate protein, thus completing the reaction cycle. Several rounds of ATP-dependent interactions between DnaJ, DnaK and GrpE are required for fully efficient folding. This chain is Protein GrpE, found in Streptococcus pyogenes serotype M3 (strain SSI-1).